Here is a 601-residue protein sequence, read N- to C-terminus: Protein NRT1/ PTR FAMILY 4.4 (601 aa).

The next 2 membrane-spanning stretches (helical) occupy residues 44 to 64 (AALF…AVGN) and 82 to 102 (ANLV…GGFL). T112 is subject to Phosphothreonine. 10 helical membrane-spanning segments follow: residues 113–133 (MLVF…QAHL), 160–180 (TLYT…PNII), 198–218 (FFNA…TLLV), 228–248 (VGFG…VAGT), 337–357 (ILLS…ILAQ), 386–406 (AIPY…FVPL), 420–440 (LQRI…AALV), 453–473 (VMLS…SEMF), 493–513 (FLTA…SVLV), and 544–564 (HFYW…LFWS).

Belongs to the major facilitator superfamily. Proton-dependent oligopeptide transporter (POT/PTR) (TC 2.A.17) family. Expressed in shoots, roots and stems.

The protein resides in the membrane. The polypeptide is Protein NRT1/ PTR FAMILY 4.4 (NPF4.4) (Arabidopsis thaliana (Mouse-ear cress)).